The following is a 398-amino-acid chain: MSERVILAYSGGLDTSVAISWIGKETGREVVAVAIDLGQGGEHMDVIRQRALDCGAVEAVVVDARDEFAEGYCLPTVLNNALYMDRYPLVSAISRPLIVKHLVAAAREHGGGIVAHGCTGKGNDQVRFEVGFASLAPDLEVLAPVRDYAWTREKAIAFAEENAIPINVTKRSPFSIDQNVWGRAVETGFLEHLWNAPTKDIYAYTEDPTINWGVPDEVIVGFERGVPVSVDGKPVSMLAAIEELNRRAGAQGVGRLDVVEDRLVGIKSREIYEAPGAMVLITAHTELEHVTLERELGRFKRQTDQRWAELVYDGLWYSPLKAALEAFVAKTQEHVSGEVRLVLHGGHIAVNGRRSAESLYDFNLATYDEGDSFDQSAARGFVYVHGLSSKLAARRDLR.

Residue 8–16 coordinates ATP; sequence AYSGGLDTS. Position 87 (Tyr-87) interacts with L-citrulline. Residue Gly-117 participates in ATP binding. Thr-119, Asn-123, and Asp-124 together coordinate L-aspartate. Residue Asn-123 coordinates L-citrulline. The L-citrulline site is built by Arg-127, Ser-175, Glu-260, and Tyr-272.

This sequence belongs to the argininosuccinate synthase family. Type 1 subfamily. As to quaternary structure, homotetramer.

The protein localises to the cytoplasm. It catalyses the reaction L-citrulline + L-aspartate + ATP = 2-(N(omega)-L-arginino)succinate + AMP + diphosphate + H(+). Its pathway is amino-acid biosynthesis; L-arginine biosynthesis; L-arginine from L-ornithine and carbamoyl phosphate: step 2/3. The protein is Argininosuccinate synthase of Mycobacterium tuberculosis (strain ATCC 25618 / H37Rv).